The following is a 153-amino-acid chain: Small ribosomal subunit protein uS13 (153 aa).

It belongs to the universal ribosomal protein uS13 family. As to quaternary structure, part of the 30S ribosomal subunit. Forms a loose heterodimer with protein S19. Forms two bridges to the 50S subunit in the 70S ribosome.

In terms of biological role, located at the top of the head of the 30S subunit, it contacts several helices of the 16S rRNA. In the 70S ribosome it contacts the 23S rRNA (bridge B1a) and protein L5 of the 50S subunit (bridge B1b), connecting the 2 subunits; these bridges are implicated in subunit movement. This is Small ribosomal subunit protein uS13 from Pyrobaculum calidifontis (strain DSM 21063 / JCM 11548 / VA1).